The following is a 125-amino-acid chain: Small ribosomal subunit protein uS12m (125 aa).

Disordered regions lie at residues 1-23 (MPTLNQLIRHGREEKRRTDRTRA) and 104-125 (LMGIPGRRSGRSKYGAEKPKSI). Residues 10-23 (HGREEKRRTDRTRA) are compositionally biased toward basic and acidic residues.

This sequence belongs to the universal ribosomal protein uS12 family.

The protein localises to the mitochondrion. Functionally, protein S12 is involved in the translation initiation step. This is Small ribosomal subunit protein uS12m (RPS12) from Raphanus sativus (Radish).